The primary structure comprises 620 residues: uncharacterized protein (620 aa).

The protein belongs to the chlamydial CPn_0512/CT_425/TC_0708 family.

This is an uncharacterized protein from Chlamydia pneumoniae (Chlamydophila pneumoniae).